Reading from the N-terminus, the 126-residue chain is NADP-reducing hydrogenase subunit HndB (126 aa).

In terms of assembly, heterotetramer composed of HndA, HndB, HndC and HndD subunits. HndA and HndB could form a heterodimeric intermediate in the electron transfer between the active site of hydrogenase subunit HndD and the NADP reduction site of the reducing subunit HndC.

It carries out the reaction H2 + NADP(+) = NADPH + H(+). Its activity is regulated as follows. Inhibited by oxygen. Catalyzes the reduction of NADP in the presence of molecular H2 to yield NADPH. This Solidesulfovibrio fructosivorans (Desulfovibrio fructosivorans) protein is NADP-reducing hydrogenase subunit HndB (hndB).